We begin with the raw amino-acid sequence, 258 residues long: Tryptophan synthase alpha chain (258 aa).

Catalysis depends on proton acceptor residues Glu52 and Asp63.

This sequence belongs to the TrpA family. In terms of assembly, tetramer of two alpha and two beta chains.

It catalyses the reaction (1S,2R)-1-C-(indol-3-yl)glycerol 3-phosphate + L-serine = D-glyceraldehyde 3-phosphate + L-tryptophan + H2O. The protein operates within amino-acid biosynthesis; L-tryptophan biosynthesis; L-tryptophan from chorismate: step 5/5. The alpha subunit is responsible for the aldol cleavage of indoleglycerol phosphate to indole and glyceraldehyde 3-phosphate. The protein is Tryptophan synthase alpha chain of Streptococcus pneumoniae serotype 2 (strain D39 / NCTC 7466).